The chain runs to 120 residues: Basic phospholipase A2 Cc2-PLA2 (120 aa).

Intrachain disulfides connect C26–C113, C28–C44, C43–C95, C49–C120, C50–C88, C57–C81, and C75–C86. Ca(2+)-binding residues include Y27, G29, and G31. H47 is an active-site residue. A Ca(2+)-binding site is contributed by D48. Residue D89 is part of the active site.

Belongs to the phospholipase A2 family. Group II subfamily. D49 sub-subfamily. As to quaternary structure, monomer. Ca(2+) is required as a cofactor. As to expression, expressed by the venom gland.

It localises to the secreted. The catalysed reaction is a 1,2-diacyl-sn-glycero-3-phosphocholine + H2O = a 1-acyl-sn-glycero-3-phosphocholine + a fatty acid + H(+). Its function is as follows. Basic phospholipase A2 that inhibits ADP-, thrombin- and arachidonic acid-induced platelet aggregation. It also exhibits anticoagulant effects upon human plasma in vitro. It induces a high hemolytic activity reaching its maximum after 24 hours. It induces a marked elevation of plasmatic levels of interleukin-6 and -10, eosinophil peroxidase and complement lytic activities and it also provokes a drastic increase of lymphocytes, monocytes and neutrophils in peripheral blood accompanied by a rapid intense migration of neutrophils to the peritoneal cavity. PLA2 catalyzes the calcium-dependent hydrolysis of the 2-acyl groups in 3-sn-phosphoglycerides. The protein is Basic phospholipase A2 Cc2-PLA2 of Cerastes cerastes (Horned desert viper).